Consider the following 451-residue polypeptide: Phosphoglucosamine mutase (451 aa).

The active-site Phosphoserine intermediate is the serine 107. Residues serine 107, aspartate 246, aspartate 248, and aspartate 250 each contribute to the Mg(2+) site. Serine 107 bears the Phosphoserine mark.

This sequence belongs to the phosphohexose mutase family. Requires Mg(2+) as cofactor. Activated by phosphorylation.

It catalyses the reaction alpha-D-glucosamine 1-phosphate = D-glucosamine 6-phosphate. Functionally, catalyzes the conversion of glucosamine-6-phosphate to glucosamine-1-phosphate. The protein is Phosphoglucosamine mutase of Burkholderia ambifaria (strain MC40-6).